A 201-amino-acid polypeptide reads, in one-letter code: Pyridoxal 5'-phosphate synthase subunit PdxT (201 aa).

49 to 51 (GES) is a binding site for L-glutamine. The active-site Nucleophile is the Cys81. L-glutamine is bound by residues Arg110 and 139–140 (IR). Catalysis depends on charge relay system residues His175 and Glu177.

Belongs to the glutaminase PdxT/SNO family. As to quaternary structure, in the presence of PdxS, forms a dodecamer of heterodimers. Only shows activity in the heterodimer.

It catalyses the reaction aldehydo-D-ribose 5-phosphate + D-glyceraldehyde 3-phosphate + L-glutamine = pyridoxal 5'-phosphate + L-glutamate + phosphate + 3 H2O + H(+). The enzyme catalyses L-glutamine + H2O = L-glutamate + NH4(+). Its pathway is cofactor biosynthesis; pyridoxal 5'-phosphate biosynthesis. Its function is as follows. Catalyzes the hydrolysis of glutamine to glutamate and ammonia as part of the biosynthesis of pyridoxal 5'-phosphate. The resulting ammonia molecule is channeled to the active site of PdxS. This Streptomyces avermitilis (strain ATCC 31267 / DSM 46492 / JCM 5070 / NBRC 14893 / NCIMB 12804 / NRRL 8165 / MA-4680) protein is Pyridoxal 5'-phosphate synthase subunit PdxT.